A 260-amino-acid polypeptide reads, in one-letter code: ATP synthase subunit a (260 aa).

Residues Met1–Asn11 constitute a propeptide, removed in mature form. 6 consecutive transmembrane segments (helical) span residues Ile37–Leu57, Tyr96–Ile116, Phe126–Phe146, Phe152–Ile172, Ile192–Ile212, and Leu217–Ile237.

The protein belongs to the ATPase A chain family. In terms of assembly, F-type ATPases have 2 components, CF(1) - the catalytic core - and CF(0) - the membrane proton channel. CF(1) has five subunits: alpha(3), beta(3), gamma(1), delta(1), epsilon(1). CF(0) has three main subunits: a, b and c.

It localises to the mitochondrion inner membrane. Its function is as follows. Mitochondrial membrane ATP synthase (F(1)F(0) ATP synthase or Complex V) produces ATP from ADP in the presence of a proton gradient across the membrane which is generated by electron transport complexes of the respiratory chain. F-type ATPases consist of two structural domains, F(1) - containing the extramembraneous catalytic core and F(0) - containing the membrane proton channel, linked together by a central stalk and a peripheral stalk. During catalysis, ATP synthesis in the catalytic domain of F(1) is coupled via a rotary mechanism of the central stalk subunits to proton translocation. Key component of the proton channel; it may play a direct role in the translocation of protons across the membrane. This Candida glabrata (strain ATCC 2001 / BCRC 20586 / JCM 3761 / NBRC 0622 / NRRL Y-65 / CBS 138) (Yeast) protein is ATP synthase subunit a (ATP6).